Here is a 163-residue protein sequence, read N- to C-terminus: Nucleotide-binding protein CYA_0935 (163 aa).

The protein belongs to the YajQ family.

Functionally, nucleotide-binding protein. The sequence is that of Nucleotide-binding protein CYA_0935 from Synechococcus sp. (strain JA-3-3Ab) (Cyanobacteria bacterium Yellowstone A-Prime).